The sequence spans 368 residues: Homoserine O-acetyltransferase (368 aa).

Residues Asn43–Glu354 form the AB hydrolase-1 domain. Catalysis depends on Ser148, which acts as the Nucleophile. Arg220 contacts substrate. Active-site residues include Asp314 and His348. Substrate is bound at residue Asp349.

The protein belongs to the AB hydrolase superfamily. MetX family. In terms of assembly, homodimer.

Its subcellular location is the cytoplasm. The catalysed reaction is L-homoserine + acetyl-CoA = O-acetyl-L-homoserine + CoA. It participates in amino-acid biosynthesis; L-methionine biosynthesis via de novo pathway; O-acetyl-L-homoserine from L-homoserine: step 1/1. Its function is as follows. Transfers an acetyl group from acetyl-CoA to L-homoserine, forming acetyl-L-homoserine. In Sulfurimonas autotrophica (strain ATCC BAA-671 / DSM 16294 / JCM 11897 / OK10), this protein is Homoserine O-acetyltransferase.